The sequence spans 127 residues: Fumarate reductase subunit C (127 aa).

3 helical membrane-spanning segments follow: residues 30–50 (ATVLPLILFTLFLTFGLGSLV), 58–78 (GWLSFMANPIVVGINIVALLG), and 107–127 (IIVLTQWAAVAFISLIVLMVV).

The protein belongs to the FrdC family. As to quaternary structure, part of an enzyme complex containing four subunits: a flavoprotein (FrdA), an iron-sulfur protein (FrdB), and two hydrophobic anchor proteins (FrdC and FrdD).

Its subcellular location is the cell inner membrane. Its function is as follows. Anchors the catalytic components of the fumarate reductase complex to the cell membrane, binds quinones. The sequence is that of Fumarate reductase subunit C from Vibrio atlanticus (strain LGP32) (Vibrio splendidus (strain Mel32)).